Reading from the N-terminus, the 97-residue chain is Small cell adhesion glycoprotein (97 aa).

Topologically, residues 1 to 36 are extracellular; it reads MTSLLTTPSPREELMTTPILQPTEALSPEDGASTAL. Thr-2 carries an O-linked (GalNAc...) threonine glycan. A glycan (O-linked (GalNAc...) serine) is linked at Ser-3. 2 O-linked (GalNAc...) threonine glycosylation sites follow: Thr-6 and Thr-7. A glycan (O-linked (GalNAc...) serine) is linked at Ser-9. 3 O-linked (GalNAc...) threonine glycosylation sites follow: Thr-16, Thr-17, and Thr-23. The chain crosses the membrane as a helical; Signal-anchor for type III membrane protein span at residues 37–57; sequence IAVVITVVFLTLLSVVILIFF. The Cytoplasmic segment spans residues 58–97; the sequence is YLYKNKGSYVTYEPTEGEPSAIVQMESDLAKGSEKEEYFI.

Belongs to the SMAGP family. Post-translationally, O-glycosylated. The O-glycan is modified with sialic acid residues. In terms of tissue distribution, detected in breast, endometrium, colon and biliary tract. Detected in polarized epithelial structures characterized by cell-cell adhesion (at protein level).

It localises to the cell membrane. The protein resides in the cytoplasmic vesicle membrane. Its function is as follows. May play a role in epithelial cell-cell contacts. May play a role in tumor invasiveness and metastasis formation. The chain is Small cell adhesion glycoprotein (SMAGP) from Homo sapiens (Human).